A 478-amino-acid chain; its full sequence is Aspartate ammonia-lyase (478 aa).

Residues threonine 104, serine 143, threonine 144, asparagine 145, and threonine 190 each coordinate L-aspartate. The SS loop stretch occupies residues 320–329 (GSSIMPAKVN). The Proton acceptor role is filled by serine 321. Residues serine 322 and lysine 327 each coordinate L-aspartate.

It belongs to the class-II fumarase/aspartase family. Aspartase subfamily. As to quaternary structure, homotetramer.

The catalysed reaction is L-aspartate = fumarate + NH4(+). Its function is as follows. Catalyzes the reversible conversion of L-aspartate to fumarate and ammonia. The sequence is that of Aspartate ammonia-lyase (aspA) from Escherichia coli O157:H7.